A 267-amino-acid polypeptide reads, in one-letter code: tRNA pseudouridine synthase A (267 aa).

The active-site Nucleophile is Asp55. Substrate is bound at residue Tyr111.

It belongs to the tRNA pseudouridine synthase TruA family.

The enzyme catalyses uridine(38/39/40) in tRNA = pseudouridine(38/39/40) in tRNA. Its function is as follows. Formation of pseudouridine at positions 38, 39 and 40 in the anticodon stem and loop of transfer RNAs. This Thermococcus onnurineus (strain NA1) protein is tRNA pseudouridine synthase A.